We begin with the raw amino-acid sequence, 278 residues long: Large ribosomal subunit protein uL2 (278 aa).

Disordered stretches follow at residues 29-57 and 224-278; these read PEKSLVRPLHSKGGRNNAGRVTVRHQGGG and VAMN…NKKR. Positions 258 to 278 are enriched in basic residues; the sequence is RSPKKASNKYIVRRRKTNKKR.

This sequence belongs to the universal ribosomal protein uL2 family. Part of the 50S ribosomal subunit. Forms a bridge to the 30S subunit in the 70S ribosome.

One of the primary rRNA binding proteins. Required for association of the 30S and 50S subunits to form the 70S ribosome, for tRNA binding and peptide bond formation. It has been suggested to have peptidyltransferase activity; this is somewhat controversial. Makes several contacts with the 16S rRNA in the 70S ribosome. In Streptomyces griseus subsp. griseus (strain JCM 4626 / CBS 651.72 / NBRC 13350 / KCC S-0626 / ISP 5235), this protein is Large ribosomal subunit protein uL2.